Consider the following 386-residue polypeptide: MGILGLSKLIADLAPQAIRESEMKHFFGRKVAIDASMCLYQFLIAVRSEGAQLATVNGDPTSHLMGMFYRTIRLLDNGIKPVYVFDGKPPDLKSGELAKRAERREEAEKALKAATDAGDDAEIEKFNRRLVRVTKEHAREAKELLSLMGVPYVDAPCEAEAQCAALVKAGKVYATATEDMDALTFGSTKLLRYLTYSEARKMPVKEFSYDKLLEGLEVNNREFIDLCILLGCDYCESIKGIGPKRAIELINNYRDIETILDNLDTSKYTVPENWNYKVARELFIEPEVADASAIDLKWTEPDEEGLVKFLCGDRQFSEERVRNGAKKLLKSKHAQTQVRLDSFFKTLPSTPNAVHAAKRKAEEAKKSANNKKAKTSGGAARGRRPK.

Residues 1–104 (MGILGLSKLI…GELAKRAERR (104 aa)) form an N-domain region. Asp-34 is a binding site for Mg(2+). Residues Arg-47 and Arg-70 each contribute to the DNA site. 5 residues coordinate Mg(2+): Asp-86, Glu-158, Glu-160, Asp-179, and Asp-181. The segment at 122–253 (EIEKFNRRLV…KRAIELINNY (132 aa)) is I-domain. Glu-158 contributes to the DNA binding site. The DNA site is built by Gly-231 and Asp-233. Asp-233 is a binding site for Mg(2+). Residues 336–344 (TQVRLDSFF) form an interaction with PCNA region. The disordered stretch occupies residues 351 to 386 (PNAVHAAKRKAEEAKKSANNKKAKTSGGAARGRRPK).

This sequence belongs to the XPG/RAD2 endonuclease family. FEN1 subfamily. As to quaternary structure, interacts with PCNA. Three molecules of FEN1 bind to one PCNA trimer with each molecule binding to one PCNA monomer. PCNA stimulates the nuclease activity without altering cleavage specificity. Mg(2+) is required as a cofactor. In terms of processing, phosphorylated. Phosphorylation upon DNA damage induces relocalization to the nuclear plasma.

The protein resides in the nucleus. It is found in the nucleolus. The protein localises to the nucleoplasm. It localises to the mitochondrion. Its function is as follows. Structure-specific nuclease with 5'-flap endonuclease and 5'-3' exonuclease activities involved in DNA replication and repair. During DNA replication, cleaves the 5'-overhanging flap structure that is generated by displacement synthesis when DNA polymerase encounters the 5'-end of a downstream Okazaki fragment. It enters the flap from the 5'-end and then tracks to cleave the flap base, leaving a nick for ligation. Also involved in the long patch base excision repair (LP-BER) pathway, by cleaving within the apurinic/apyrimidinic (AP) site-terminated flap. Acts as a genome stabilization factor that prevents flaps from equilibrating into structures that lead to duplications and deletions. Also possesses 5'-3' exonuclease activity on nicked or gapped double-stranded DNA, and exhibits RNase H activity. Also involved in replication and repair of rDNA and in repairing mitochondrial DNA. The sequence is that of Flap endonuclease 1 from Drosophila persimilis (Fruit fly).